The sequence spans 380 residues: Alcohol dehydrogenase 1 (380 aa).

Residues Cys-48, Thr-50, His-70, Cys-100, Cys-103, Cys-106, Cys-114, and Cys-178 each contribute to the Zn(2+) site. Residues Thr-50 and His-70 each coordinate an alcohol. Thr-50 is a binding site for NAD(+). Residues 203–208 (GLGAVG), Asp-227, Arg-232, Thr-273, Val-296, 296–298 (VGV), and Arg-373 contribute to the NAD(+) site.

Belongs to the zinc-containing alcohol dehydrogenase family. In terms of assembly, homodimer. Zn(2+) is required as a cofactor.

It localises to the cytoplasm. The enzyme catalyses a primary alcohol + NAD(+) = an aldehyde + NADH + H(+). It catalyses the reaction a secondary alcohol + NAD(+) = a ketone + NADH + H(+). This is Alcohol dehydrogenase 1 from Pisum sativum (Garden pea).